A 165-amino-acid polypeptide reads, in one-letter code: MSVLEQKKQIVTEIATKLKESQSTVVVDYRGLNVAEVTELRKQLREAGCEFKVYKNTMTRRAAEVAELTELNDVLVGPTAIAFHNEDAIAPAKIINSFAKEHEALEIKAGVIEGNVASVEEVKALAELPSREGLLSMLLSVLQAPVRNFALATKAVADQKEEQGA.

The protein belongs to the universal ribosomal protein uL10 family. In terms of assembly, part of the ribosomal stalk of the 50S ribosomal subunit. The N-terminus interacts with L11 and the large rRNA to form the base of the stalk. The C-terminus forms an elongated spine to which L12 dimers bind in a sequential fashion forming a multimeric L10(L12)X complex.

Its function is as follows. Forms part of the ribosomal stalk, playing a central role in the interaction of the ribosome with GTP-bound translation factors. In Halalkalibacterium halodurans (strain ATCC BAA-125 / DSM 18197 / FERM 7344 / JCM 9153 / C-125) (Bacillus halodurans), this protein is Large ribosomal subunit protein uL10 (rplJ).